Here is a 156-residue protein sequence, read N- to C-terminus: Lipoprotein signal peptidase (156 aa).

The next 3 membrane-spanning stretches (helical) occupy residues 5–25 (FKFIFYFWGAFVLVFALDQWV), 64–84 (YLHLALIGVLFIYLFWQRTLL), and 89–109 (IAFGMMLGAGVSNLLDRFIHG). Residues aspartate 113 and aspartate 130 contribute to the active site. A helical membrane pass occupies residues 122–142 (NFAIFNVADVMINISVALILI).

The protein belongs to the peptidase A8 family.

It is found in the cell inner membrane. The enzyme catalyses Release of signal peptides from bacterial membrane prolipoproteins. Hydrolyzes -Xaa-Yaa-Zaa-|-(S,diacylglyceryl)Cys-, in which Xaa is hydrophobic (preferably Leu), and Yaa (Ala or Ser) and Zaa (Gly or Ala) have small, neutral side chains.. It participates in protein modification; lipoprotein biosynthesis (signal peptide cleavage). This protein specifically catalyzes the removal of signal peptides from prolipoproteins. In Campylobacter jejuni subsp. jejuni serotype O:2 (strain ATCC 700819 / NCTC 11168), this protein is Lipoprotein signal peptidase.